Reading from the N-terminus, the 311-residue chain is Aspartate carbamoyltransferase catalytic subunit (311 aa).

Residues arginine 55 and threonine 56 each coordinate carbamoyl phosphate. An L-aspartate-binding site is contributed by lysine 85. Carbamoyl phosphate-binding residues include arginine 106, histidine 135, and glutamine 138. Residues arginine 168 and arginine 230 each contribute to the L-aspartate site. 2 residues coordinate carbamoyl phosphate: leucine 268 and proline 269.

The protein belongs to the aspartate/ornithine carbamoyltransferase superfamily. ATCase family. As to quaternary structure, heterododecamer (2C3:3R2) of six catalytic PyrB chains organized as two trimers (C3), and six regulatory PyrI chains organized as three dimers (R2).

The catalysed reaction is carbamoyl phosphate + L-aspartate = N-carbamoyl-L-aspartate + phosphate + H(+). It functions in the pathway pyrimidine metabolism; UMP biosynthesis via de novo pathway; (S)-dihydroorotate from bicarbonate: step 2/3. Its function is as follows. Catalyzes the condensation of carbamoyl phosphate and aspartate to form carbamoyl aspartate and inorganic phosphate, the committed step in the de novo pyrimidine nucleotide biosynthesis pathway. The chain is Aspartate carbamoyltransferase catalytic subunit from Salmonella dublin (strain CT_02021853).